We begin with the raw amino-acid sequence, 286 residues long: Bifunctional protein FolD (286 aa).

Residues 166-168 (GRS) and serine 191 each bind NADP(+).

This sequence belongs to the tetrahydrofolate dehydrogenase/cyclohydrolase family. In terms of assembly, homodimer.

It catalyses the reaction (6R)-5,10-methylene-5,6,7,8-tetrahydrofolate + NADP(+) = (6R)-5,10-methenyltetrahydrofolate + NADPH. The enzyme catalyses (6R)-5,10-methenyltetrahydrofolate + H2O = (6R)-10-formyltetrahydrofolate + H(+). It functions in the pathway one-carbon metabolism; tetrahydrofolate interconversion. Catalyzes the oxidation of 5,10-methylenetetrahydrofolate to 5,10-methenyltetrahydrofolate and then the hydrolysis of 5,10-methenyltetrahydrofolate to 10-formyltetrahydrofolate. The sequence is that of Bifunctional protein FolD from Lactiplantibacillus plantarum (strain ATCC BAA-793 / NCIMB 8826 / WCFS1) (Lactobacillus plantarum).